A 273-amino-acid polypeptide reads, in one-letter code: SPRY domain-containing SOCS box protein 4 (273 aa).

One can recognise a B30.2/SPRY domain in the interval 34 to 233; it reads PARLDQLLDM…MRYINGLDPE (200 aa). Positions 234-273 constitute an SOCS box domain; that stretch reads PLPLMDLCRRSIRSALGRQRLRDIGSLPLPQSLKNYLQYQ.

Belongs to the SPSB family. In terms of assembly, component of the probable ECS(SPSB4) E3 ubiquitin-protein ligase complex which contains CUL5, RNF7/RBX2, Elongin BC complex and SPSB4. Interacts with CUL5; RNF7; ELOB and ELOC. Interacts with MET. Interacts (via B30.2/SPRY domain) with PAWR; this interaction occurs in association with the Elongin BC complex. Interacts with NOS2. Interacts with EPHB2.

It localises to the cytoplasm. The protein resides in the cytosol. The protein operates within protein modification; protein ubiquitination. Substrate recognition component of a SCF-like ECS (Elongin BC-CUL2/5-SOCS-box protein) E3 ubiquitin-protein ligase complex which mediates the ubiquitination and subsequent proteasomal degradation of target proteins. Negatively regulates nitric oxide (NO) production and limits cellular toxicity in activated macrophages by mediating the ubiquitination and proteasomal degradation of NOS2. Acts as a bridge which links NOS2 with the ECS E3 ubiquitin ligase complex components ELOC and CUL5. Diminishes EphB2-dependent cell repulsive responses by mediating the ubiquitination and degradation of the EphB2/CTF2. Regulates cellular clock function by mediating ubiquitination and proteasomal degradation of the circadian transcriptional repressor NR1D1. The chain is SPRY domain-containing SOCS box protein 4 (Spsb4) from Mus musculus (Mouse).